The chain runs to 209 residues: MDLHNIREDYSKQELSQAHCHADPIQQFEQWLEEAITAKANEPTAMNVATVLDGKPTSRIVLLKEVNPNGFVFFTNYQSRKGQAIEQNPYAALTFFWAELERSVRIEGRIEKISAEESDRYFASRPYTSRVGAWASNQSQVLSGKSELVAKAALIAAKHPLHVPRPPHWGGYIVLPERIEFWQGRPSRLHDRICYRLVEGKWHKERLSP.

Substrate is bound by residues Arg-7–Tyr-10 and Lys-64. FMN-binding positions include Arg-59–Lys-64, Phe-74–Thr-75, Arg-80, and Lys-81. Substrate-binding residues include Tyr-121, Arg-125, and Ser-129. Residues Gln-138 to Ser-139 and Trp-182 contribute to the FMN site. Arg-188–His-190 serves as a coordination point for substrate. Arg-192 serves as a coordination point for FMN.

It belongs to the pyridoxamine 5'-phosphate oxidase family. Homodimer. The cofactor is FMN.

The catalysed reaction is pyridoxamine 5'-phosphate + O2 + H2O = pyridoxal 5'-phosphate + H2O2 + NH4(+). The enzyme catalyses pyridoxine 5'-phosphate + O2 = pyridoxal 5'-phosphate + H2O2. The protein operates within cofactor metabolism; pyridoxal 5'-phosphate salvage; pyridoxal 5'-phosphate from pyridoxamine 5'-phosphate: step 1/1. Its pathway is cofactor metabolism; pyridoxal 5'-phosphate salvage; pyridoxal 5'-phosphate from pyridoxine 5'-phosphate: step 1/1. In terms of biological role, catalyzes the oxidation of either pyridoxine 5'-phosphate (PNP) or pyridoxamine 5'-phosphate (PMP) into pyridoxal 5'-phosphate (PLP). In Actinobacillus pleuropneumoniae serotype 3 (strain JL03), this protein is Pyridoxine/pyridoxamine 5'-phosphate oxidase.